The primary structure comprises 605 residues: Dynein axonemal intermediate chain 2 (605 aa).

WD repeat units lie at residues 150 to 203 (KTIN…IWDL), 208 to 246 (KPEL…CWDT), 253 to 294 (AELS…WWDI), 301 to 347 (TEVV…SCNR), 355 to 393 (KIVC…IWSE), 399 to 437 (SIMW…IWDF), and 443 to 481 (DPTL…LLEV). A disordered region spans residues 568–605 (IKLTPVPQQPSPEEDQVVEEGEEAAGEEGDEEVEEDLA). Residues 579-605 (PEEDQVVEEGEEAAGEEGDEEVEEDLA) show a composition bias toward acidic residues.

Belongs to the dynein intermediate chain family. In terms of assembly, consists of at least two heavy chains and a number of intermediate and light chains. Interacts with DNAAF2. Interacts with DNAAF6/PIH1D3. Interacts with HEATR2; probably involved in outer arm dynein assembly. Interacts with CFAP53. As to expression, highly expressed in trachea and testis. Expressed in respiratory ciliated cells (at protein level).

The protein localises to the cytoplasm. It localises to the cytoskeleton. It is found in the cilium axoneme. The protein resides in the dynein axonemal particle. Its function is as follows. Part of the dynein complex of respiratory cilia. The protein is Dynein axonemal intermediate chain 2 of Homo sapiens (Human).